Consider the following 61-residue polypeptide: Small ribosomal subunit protein uS14 (61 aa).

C24, C27, C40, and C43 together coordinate Zn(2+).

It belongs to the universal ribosomal protein uS14 family. Zinc-binding uS14 subfamily. In terms of assembly, part of the 30S ribosomal subunit. Contacts proteins S3 and S10. Requires Zn(2+) as cofactor.

In terms of biological role, binds 16S rRNA, required for the assembly of 30S particles and may also be responsible for determining the conformation of the 16S rRNA at the A site. This Roseiflexus sp. (strain RS-1) protein is Small ribosomal subunit protein uS14.